Here is a 352-residue protein sequence, read N- to C-terminus: Holliday junction branch migration complex subunit RuvB (352 aa).

The interval 13 to 201 (FSFRKKELRL…FGISQKIEFY (189 aa)) is large ATPase domain (RuvB-L). ATP is bound by residues arginine 41, glycine 82, lysine 85, threonine 86, threonine 87, 148–150 (EDF), arginine 191, tyrosine 201, and arginine 238. Residue threonine 86 coordinates Mg(2+). Residues 202-273 (TCDELKQIIV…LIKKALNSYQ (72 aa)) form a small ATPAse domain (RuvB-S) region. Residues 276-352 (EKGLDSLDRH…KYIDSKDDNF (77 aa)) are head domain (RuvB-H). Positions 330 and 335 each coordinate DNA.

The protein belongs to the RuvB family. As to quaternary structure, homohexamer. Forms an RuvA(8)-RuvB(12)-Holliday junction (HJ) complex. HJ DNA is sandwiched between 2 RuvA tetramers; dsDNA enters through RuvA and exits via RuvB. An RuvB hexamer assembles on each DNA strand where it exits the tetramer. Each RuvB hexamer is contacted by two RuvA subunits (via domain III) on 2 adjacent RuvB subunits; this complex drives branch migration. In the full resolvosome a probable DNA-RuvA(4)-RuvB(12)-RuvC(2) complex forms which resolves the HJ.

It localises to the cytoplasm. The enzyme catalyses ATP + H2O = ADP + phosphate + H(+). Its function is as follows. The RuvA-RuvB-RuvC complex processes Holliday junction (HJ) DNA during genetic recombination and DNA repair, while the RuvA-RuvB complex plays an important role in the rescue of blocked DNA replication forks via replication fork reversal (RFR). RuvA specifically binds to HJ cruciform DNA, conferring on it an open structure. The RuvB hexamer acts as an ATP-dependent pump, pulling dsDNA into and through the RuvAB complex. RuvB forms 2 homohexamers on either side of HJ DNA bound by 1 or 2 RuvA tetramers; 4 subunits per hexamer contact DNA at a time. Coordinated motions by a converter formed by DNA-disengaged RuvB subunits stimulates ATP hydrolysis and nucleotide exchange. Immobilization of the converter enables RuvB to convert the ATP-contained energy into a lever motion, pulling 2 nucleotides of DNA out of the RuvA tetramer per ATP hydrolyzed, thus driving DNA branch migration. The RuvB motors rotate together with the DNA substrate, which together with the progressing nucleotide cycle form the mechanistic basis for DNA recombination by continuous HJ branch migration. Branch migration allows RuvC to scan DNA until it finds its consensus sequence, where it cleaves and resolves cruciform DNA. This Prochlorococcus marinus (strain AS9601) protein is Holliday junction branch migration complex subunit RuvB.